We begin with the raw amino-acid sequence, 109 residues long: uncharacterized protein (109 aa).

The helical transmembrane segment at 63–85 (LFVKTFFACTYIIMLAFQVYIFL) threads the bilayer.

The protein localises to the membrane. This is an uncharacterized protein from Saccharomyces cerevisiae (strain ATCC 204508 / S288c) (Baker's yeast).